The primary structure comprises 503 residues: UPF0522 protein C (503 aa).

Positions 1 to 18 (MKLFILIILSICLALVNS) are cleaved as a signal peptide. N-linked (GlcNAc...) asparagine glycans are attached at residues Asn-330, Asn-337, and Asn-370.

Belongs to the UPF0522 family.

It is found in the secreted. This chain is UPF0522 protein C, found in Dictyostelium discoideum (Social amoeba).